The following is a 325-amino-acid chain: Cytochrome c1, heme protein, mitochondrial (325 aa).

A mitochondrion-targeting transit peptide spans 1–84 (MAAAAASLRG…AMALHSAVSA (84 aa)). The Mitochondrial intermembrane segment spans residues 85-281 (SDLELHPPSY…TFLRWASEPE (197 aa)). The Cytochrome c domain maps to 108 to 209 (TSIRRGFQVY…IVRARHGGED (102 aa)). Heme c-binding residues include Cys121, Cys124, and His125. Ser182 carries the phosphoserine modification. Met244 is a binding site for heme c. Residues 282-315 (HDHRKRMGLKMLMMMALLVPLVYTIKRHKWSVLK) traverse the membrane as a helical segment. Topologically, residues 316-325 (SRKLAYRPPK) are mitochondrial matrix.

The protein belongs to the cytochrome c family. Component of the ubiquinol-cytochrome c oxidoreductase (cytochrome b-c1 complex, complex III, CIII), a multisubunit enzyme composed of 11 subunits. The complex is composed of 3 respiratory subunits cytochrome b, cytochrome c1 and Rieske protein UQCRFS1, 2 core protein subunits UQCRC1/QCR1 and UQCRC2/QCR2, and 6 low-molecular weight protein subunits UQCRH/QCR6, UQCRB/QCR7, UQCRQ/QCR8, UQCR10/QCR9, UQCR11/QCR10 and subunit 9, the cleavage product of Rieske protein UQCRFS1. The complex exists as an obligatory dimer and forms supercomplexes (SCs) in the inner mitochondrial membrane with NADH-ubiquinone oxidoreductase (complex I, CI) and cytochrome c oxidase (complex IV, CIV), resulting in different assemblies (supercomplex SCI(1)III(2)IV(1) and megacomplex MCI(2)III(2)IV(2)). Interacts with FLVCR2; this interaction occurs in the absence of heme and is disrupted upon heme binding. Heme c serves as cofactor.

Its subcellular location is the mitochondrion inner membrane. It carries out the reaction a quinol + 2 Fe(III)-[cytochrome c](out) = a quinone + 2 Fe(II)-[cytochrome c](out) + 2 H(+)(out). In terms of biological role, component of the ubiquinol-cytochrome c oxidoreductase, a multisubunit transmembrane complex that is part of the mitochondrial electron transport chain which drives oxidative phosphorylation. The respiratory chain contains 3 multisubunit complexes succinate dehydrogenase (complex II, CII), ubiquinol-cytochrome c oxidoreductase (cytochrome b-c1 complex, complex III, CIII) and cytochrome c oxidase (complex IV, CIV), that cooperate to transfer electrons derived from NADH and succinate to molecular oxygen, creating an electrochemical gradient over the inner membrane that drives transmembrane transport and the ATP synthase. The cytochrome b-c1 complex catalyzes electron transfer from ubiquinol to cytochrome c, linking this redox reaction to translocation of protons across the mitochondrial inner membrane, with protons being carried across the membrane as hydrogens on the quinol. In the process called Q cycle, 2 protons are consumed from the matrix, 4 protons are released into the intermembrane space and 2 electrons are passed to cytochrome c. Cytochrome c1 is a catalytic core subunit containing a c-type heme. It transfers electrons from the [2Fe-2S] iron-sulfur cluster of the Rieske protein to cytochrome c. The protein is Cytochrome c1, heme protein, mitochondrial (CYC1) of Homo sapiens (Human).